The sequence spans 221 residues: Probable septum site-determining protein MinC (221 aa).

The protein belongs to the MinC family. As to quaternary structure, interacts with MinD and FtsZ.

Cell division inhibitor that blocks the formation of polar Z ring septums. Rapidly oscillates between the poles of the cell to destabilize FtsZ filaments that have formed before they mature into polar Z rings. Prevents FtsZ polymerization. This is Probable septum site-determining protein MinC from Shewanella woodyi (strain ATCC 51908 / MS32).